We begin with the raw amino-acid sequence, 319 residues long: BTB/POZ domain-containing adapter for CUL3-mediated RhoA degradation protein 2 (319 aa).

The BTB domain maps to 31-99 (KYIRLNVGGC…LRDDTITLPK (69 aa)).

It belongs to the BACURD family. As to quaternary structure, component of the BCR(TNFAIP1) E3 ubiquitin ligase complex, at least composed of cul3, tnfaip1/bacurd2 and rbx1.

It is found in the cytoplasm. The protein resides in the nucleus. The protein localises to the endosome. It participates in protein modification; protein ubiquitination. Functionally, substrate-specific adapter of a BCR (BTB-CUL3-RBX1) E3 ubiquitin-protein ligase complex involved in regulation of cytoskeleton structure. The BCR(TNFAIP1) E3 ubiquitin ligase complex mediates the ubiquitination of target proteins, leading to their degradation by the proteasome. In Xenopus tropicalis (Western clawed frog), this protein is BTB/POZ domain-containing adapter for CUL3-mediated RhoA degradation protein 2 (tnfaip1).